The following is a 209-amino-acid chain: Thiamine-phosphate synthase (209 aa).

4-amino-2-methyl-5-(diphosphooxymethyl)pyrimidine-binding positions include 36 to 40 (QYRDK) and Asn68. Asp69 and Asp87 together coordinate Mg(2+). Thr106 lines the 4-amino-2-methyl-5-(diphosphooxymethyl)pyrimidine pocket. 133–135 (SST) contributes to the 2-[(2R,5Z)-2-carboxy-4-methylthiazol-5(2H)-ylidene]ethyl phosphate binding site. Lys136 lines the 4-amino-2-methyl-5-(diphosphooxymethyl)pyrimidine pocket. Gly163 is a binding site for 2-[(2R,5Z)-2-carboxy-4-methylthiazol-5(2H)-ylidene]ethyl phosphate.

Belongs to the thiamine-phosphate synthase family. It depends on Mg(2+) as a cofactor.

The catalysed reaction is 2-[(2R,5Z)-2-carboxy-4-methylthiazol-5(2H)-ylidene]ethyl phosphate + 4-amino-2-methyl-5-(diphosphooxymethyl)pyrimidine + 2 H(+) = thiamine phosphate + CO2 + diphosphate. The enzyme catalyses 2-(2-carboxy-4-methylthiazol-5-yl)ethyl phosphate + 4-amino-2-methyl-5-(diphosphooxymethyl)pyrimidine + 2 H(+) = thiamine phosphate + CO2 + diphosphate. It carries out the reaction 4-methyl-5-(2-phosphooxyethyl)-thiazole + 4-amino-2-methyl-5-(diphosphooxymethyl)pyrimidine + H(+) = thiamine phosphate + diphosphate. It participates in cofactor biosynthesis; thiamine diphosphate biosynthesis; thiamine phosphate from 4-amino-2-methyl-5-diphosphomethylpyrimidine and 4-methyl-5-(2-phosphoethyl)-thiazole: step 1/1. Functionally, condenses 4-methyl-5-(beta-hydroxyethyl)thiazole monophosphate (THZ-P) and 2-methyl-4-amino-5-hydroxymethyl pyrimidine pyrophosphate (HMP-PP) to form thiamine monophosphate (TMP). This chain is Thiamine-phosphate synthase, found in Pseudomonas paraeruginosa (strain DSM 24068 / PA7) (Pseudomonas aeruginosa (strain PA7)).